Here is a 608-residue protein sequence, read N- to C-terminus: Protein UL27 (608 aa).

Over residues 1-13 (MNPVDQPPPPPLT) the composition is skewed to pro residues. The disordered stretch occupies residues 1 to 33 (MNPVDQPPPPPLTQQPEEQAKEDHDDGDERLFR). Residues 18–33 (EQAKEDHDDGDERLFR) are compositionally biased toward basic and acidic residues.

It belongs to the herpesviridae U4 family. As to quaternary structure, interacts with host KAT5, PSME3 and EP400.

It localises to the host nucleus. Its subcellular location is the host nucleolus. Its function is as follows. Promotes a cell cycle arrest in G0/G1 by inducing the proteasomal degradation of host histone acetyltransferase KAT5/Tip60. In Homo sapiens (Human), this protein is Protein UL27 (UL27).